The following is a 187-amino-acid chain: Elongation factor P (187 aa).

The protein belongs to the elongation factor P family.

It is found in the cytoplasm. The protein operates within protein biosynthesis; polypeptide chain elongation. Its function is as follows. Involved in peptide bond synthesis. Stimulates efficient translation and peptide-bond synthesis on native or reconstituted 70S ribosomes in vitro. Probably functions indirectly by altering the affinity of the ribosome for aminoacyl-tRNA, thus increasing their reactivity as acceptors for peptidyl transferase. The chain is Elongation factor P from Corynebacterium glutamicum (strain R).